The primary structure comprises 313 residues: Porphobilinogen deaminase (313 aa).

An S-(dipyrrolylmethanemethyl)cysteine modification is found at Cys242.

This sequence belongs to the HMBS family. Monomer. It depends on dipyrromethane as a cofactor.

The catalysed reaction is 4 porphobilinogen + H2O = hydroxymethylbilane + 4 NH4(+). The protein operates within porphyrin-containing compound metabolism; protoporphyrin-IX biosynthesis; coproporphyrinogen-III from 5-aminolevulinate: step 2/4. Tetrapolymerization of the monopyrrole PBG into the hydroxymethylbilane pre-uroporphyrinogen in several discrete steps. This chain is Porphobilinogen deaminase, found in Pseudomonas putida (strain GB-1).